We begin with the raw amino-acid sequence, 742 residues long: Phosphatidylinositol 4-phosphate 5-kinase its3 (742 aa).

2 disordered regions span residues 1–21 and 82–228; these read MKID…IPSY and LFKE…PDIG. Low complexity-rich tracts occupy residues 90–105 and 129–142; these read PSNP…SNDS and PSSN…LQNL. Composition is skewed to polar residues over residues 158–181 and 193–218; these read RSSS…SSSQ and EKNS…TSGS. Positions 264 to 662 constitute a PIPK domain; sequence GHENYVTAYN…RFYKFVESSI (399 aa). Residues 677–742 form a disordered region; the sequence is QDGQRVNKQQ…RNVTTNTSSS (66 aa). Positions 680–719 are enriched in polar residues; that stretch reads QRVNKQQSVNAGNVRTNNKHGSLNNNTAPSSRNAKSTSAH.

As to quaternary structure, interacts with opy1 (via domain PH 1); the interaction is direct but opy1 does not appear to regulate its3 localization or function. In terms of processing, phosphorylated by casein kinase I. Phosphorylation inactivates the enzyme.

It localises to the cell membrane. It catalyses the reaction a 1,2-diacyl-sn-glycero-3-phospho-(1D-myo-inositol 4-phosphate) + ATP = a 1,2-diacyl-sn-glycero-3-phospho-(1D-myo-inositol-4,5-bisphosphate) + ADP + H(+). In terms of biological role, catalyzes the phosphorylation of phosphatidylinositol 4-phosphate on the fifth hydroxyl of the myo-inositol ring, to form phosphatidylinositol 4,5-bisphosphate. Involved, together with the calcineurin ppb1, in cytokinesis. The chain is Phosphatidylinositol 4-phosphate 5-kinase its3 (its3) from Schizosaccharomyces pombe (strain 972 / ATCC 24843) (Fission yeast).